The primary structure comprises 118 residues: Group 1 truncated hemoglobin GlbN (118 aa).

H70 provides a ligand contact to heme.

It belongs to the truncated hemoglobin family. Group I subfamily. In terms of assembly, monomer. Requires heme as cofactor.

It is found in the membrane. The sequence is that of Group 1 truncated hemoglobin GlbN (glbN) from Nostoc sp. (strain MUN 8820).